Consider the following 147-residue polypeptide: Hemoglobin subunit gamma-1 (147 aa).

Gly2 carries the post-translational modification N-acetylglycine. In terms of domain architecture, Globin spans 3-147 (HFTEEDKATI…VASALSSRYH (145 aa)). Thr13 is subject to Phosphothreonine. A phosphoserine mark is found at Ser45, Ser51, and Ser53. Lys60 bears the N6-acetyllysine mark. His64 serves as a coordination point for heme b. An N6-acetyllysine modification is found at Lys83. His93 serves as a coordination point for heme b. An S-nitrosocysteine modification is found at Cys94. Ser140 is modified (phosphoserine).

It belongs to the globin family. Heterotetramer of two alpha chains and two gamma chains in fetal hemoglobin (Hb F). As to expression, red blood cells.

In terms of biological role, gamma chains make up the fetal hemoglobin F, in combination with alpha chains. The sequence is that of Hemoglobin subunit gamma-1 (HBG1) from Pongo pygmaeus (Bornean orangutan).